We begin with the raw amino-acid sequence, 122 residues long: Large ribosomal subunit protein bL12 (122 aa).

Belongs to the bacterial ribosomal protein bL12 family. Homodimer. Part of the ribosomal stalk of the 50S ribosomal subunit. Forms a multimeric L10(L12)X complex, where L10 forms an elongated spine to which 2 to 4 L12 dimers bind in a sequential fashion. Binds GTP-bound translation factors.

Functionally, forms part of the ribosomal stalk which helps the ribosome interact with GTP-bound translation factors. Is thus essential for accurate translation. In Blochmanniella pennsylvanica (strain BPEN), this protein is Large ribosomal subunit protein bL12.